Consider the following 320-residue polypeptide: Cytochrome f (320 aa).

The signal sequence occupies residues 1–35 (MQTRNTFSWIREEITRSISVSLIIYIITRASISSA). Heme-binding residues include tyrosine 36, cysteine 56, cysteine 59, and histidine 60. A helical transmembrane segment spans residues 286-306 (VQGLLFFLASVVLAQIFLVLK).

Belongs to the cytochrome f family. In terms of assembly, the 4 large subunits of the cytochrome b6-f complex are cytochrome b6, subunit IV (17 kDa polypeptide, petD), cytochrome f and the Rieske protein, while the 4 small subunits are PetG, PetL, PetM and PetN. The complex functions as a dimer. Requires heme as cofactor.

The protein resides in the plastid. The protein localises to the chloroplast thylakoid membrane. Its function is as follows. Component of the cytochrome b6-f complex, which mediates electron transfer between photosystem II (PSII) and photosystem I (PSI), cyclic electron flow around PSI, and state transitions. This Draba nemorosa (Woodland whitlowgrass) protein is Cytochrome f.